The sequence spans 363 residues: Serpentine receptor class T-55 (363 aa).

The N-terminal stretch at 1 to 18 (MKLRHFLIFLMLIPISSS) is a signal peptide. The next 7 helical transmembrane spans lie at 70-90 (IYYISSGLFFQLIGWPVIWVF), 107-127 (VFIGLIEITEIWGNSVFPGFV), 143-163 (IVGKMTMVQWVLGSSSAAFLG), 187-207 (WLTVLFFYACYGSIFFDTVLF), 231-251 (FLYFHNIIVATTLILVYACLC), 278-298 (ICISLTYAIPAISFVTMFVLP), and 303-323 (FFHVSDITYQLSGGLPFIMYI).

It belongs to the nematode receptor-like protein srt family.

It is found in the membrane. This chain is Serpentine receptor class T-55 (srt-55), found in Caenorhabditis elegans.